Consider the following 248-residue polypeptide: Biosynthetic peptidoglycan transglycosylase (248 aa).

Residues 17 to 37 (LLIFFFASTILAVIVYRFMPV) traverse the membrane as a helical segment.

Belongs to the glycosyltransferase 51 family.

The protein resides in the cell inner membrane. It carries out the reaction [GlcNAc-(1-&gt;4)-Mur2Ac(oyl-L-Ala-gamma-D-Glu-L-Lys-D-Ala-D-Ala)](n)-di-trans,octa-cis-undecaprenyl diphosphate + beta-D-GlcNAc-(1-&gt;4)-Mur2Ac(oyl-L-Ala-gamma-D-Glu-L-Lys-D-Ala-D-Ala)-di-trans,octa-cis-undecaprenyl diphosphate = [GlcNAc-(1-&gt;4)-Mur2Ac(oyl-L-Ala-gamma-D-Glu-L-Lys-D-Ala-D-Ala)](n+1)-di-trans,octa-cis-undecaprenyl diphosphate + di-trans,octa-cis-undecaprenyl diphosphate + H(+). The protein operates within cell wall biogenesis; peptidoglycan biosynthesis. Peptidoglycan polymerase that catalyzes glycan chain elongation from lipid-linked precursors. This is Biosynthetic peptidoglycan transglycosylase from Bacteroides thetaiotaomicron (strain ATCC 29148 / DSM 2079 / JCM 5827 / CCUG 10774 / NCTC 10582 / VPI-5482 / E50).